Reading from the N-terminus, the 168-residue chain is Photosystem I assembly protein Ycf3 (168 aa).

3 TPR repeats span residues 35-68 (AFTYYRDGMSAQSEGNYAEALQNYYEAMRLEIDP), 72-105 (SYILYNIGLIHTSNGEHMKALEYYFRALERNPFL), and 120-153 (GEKAIQQGDSEIAEAWFDQAAEYWKQALALTPGN).

Belongs to the Ycf3 family.

The protein resides in the plastid membrane. In terms of biological role, essential for the assembly of the photosystem I (PSI) complex. May act as a chaperone-like factor to guide the assembly of the PSI subunits. The chain is Photosystem I assembly protein Ycf3 from Cuscuta exaltata (Tall dodder).